The following is a 126-amino-acid chain: Nucleoside diphosphate kinase B (126 aa).

5 residues coordinate ATP: Lys6, Phe37, Thr68, Arg79, and Asn89. His92 (pros-phosphohistidine intermediate) is an active-site residue.

It belongs to the NDK family. Mg(2+) serves as cofactor.

Its subcellular location is the cytoplasm. It is found in the nucleus. The protein resides in the cell projection. It localises to the lamellipodium. The protein localises to the ruffle. The enzyme catalyses a 2'-deoxyribonucleoside 5'-diphosphate + ATP = a 2'-deoxyribonucleoside 5'-triphosphate + ADP. It carries out the reaction a ribonucleoside 5'-diphosphate + ATP = a ribonucleoside 5'-triphosphate + ADP. In terms of biological role, major role in the synthesis of nucleoside triphosphates other than ATP. The sequence is that of Nucleoside diphosphate kinase B (nme2) from Merluccius capensis (Shallow-water Cape hake).